Here is a 756-residue protein sequence, read N- to C-terminus: Serine/threonine-protein kinase DCLK1 (756 aa).

2 positions are modified to phosphoserine: Ser-32 and Ser-36. Thr-46 carries the post-translational modification Phosphothreonine. Doublecortin domains are found at residues 57 to 143 and 186 to 269; these read KKVR…LEYT and KLVT…QDDF. The interval 288–393 is disordered; sequence ASASRRGTTK…QRGWRREESE (106 aa). Residues 297-313 show a composition bias toward low complexity; sequence KSPGPSRRSKSPASTSS. 13 positions are modified to phosphoserine: Ser-305, Ser-307, Ser-330, Ser-332, Ser-334, Ser-337, Ser-347, Ser-352, Ser-353, Ser-355, Ser-358, Cys-362, and Ser-364. Low complexity predominate over residues 347–364; it reads SQHGGSSTSLSSTKVCSS. Residues 366–375 are compositionally biased toward acidic residues; that stretch reads DENDGPGEGD. Ser-392 bears the Phosphoserine mark. Residues 406–663 form the Protein kinase domain; that stretch reads YKVGRTIGDG…AVQVLEHPWV (258 aa). ATP is bound by residues 412 to 420 and Lys-435; that span reads IGDGNFAVV. The Proton acceptor role is filled by Asp-527. Position 536 is a phosphotyrosine (Tyr-536). The span at 711 to 723 shows a compositional bias: basic and acidic residues; sequence QVFRRRRNQDVRS. The interval 711–756 is disordered; sequence QVFRRRRNQDVRSRYKAQPAPPELNSESEDYSPSSSETVRSPNSPF. Phosphoserine occurs at positions 742, 751, and 754.

It belongs to the protein kinase superfamily. CAMK Ser/Thr protein kinase family. CaMK subfamily.

The enzyme catalyses L-seryl-[protein] + ATP = O-phospho-L-seryl-[protein] + ADP + H(+). It carries out the reaction L-threonyl-[protein] + ATP = O-phospho-L-threonyl-[protein] + ADP + H(+). Probable kinase that may be involved in a calcium-signaling pathway controlling neuronal migration in the developing brain. May also participate in functions of the mature nervous system. This Mus musculus (Mouse) protein is Serine/threonine-protein kinase DCLK1 (Dclk1).